We begin with the raw amino-acid sequence, 104 residues long: uncharacterized protein (104 aa).

The protein to M.jannaschii MJ1511.

This is an uncharacterized protein from Methanocaldococcus jannaschii (strain ATCC 43067 / DSM 2661 / JAL-1 / JCM 10045 / NBRC 100440) (Methanococcus jannaschii).